The following is a 308-amino-acid chain: Neurexophilin-4 (308 aa).

The N-terminal stretch at 1 to 23 (MRLLPEWFLLLFGPWLLRKAVSA) is a signal peptide. Residues 24 to 84 (QIPESGRPQY…GALARAGAAG (61 aa)) form an II region. Low complexity predominate over residues 40-51 (AAGAGAPGQQLP). The interval 40–59 (AAGAGAPGQQLPEPRSSDGL) is disordered. Residues Asn-72, Asn-133, Asn-143, and Asn-149 are each glycosylated (N-linked (GlcNAc...) asparagine). An III region spans residues 85 to 163 (ALPAQRTKRK…IVPPSKRVEF (79 aa)). The interval 164 to 224 (GGVWLPGPVP…PLGGALGVPG (61 aa)) is IV (linker domain). Residues 225–308 (AKESRAFNCH…NFQSEHPYFG (84 aa)) are v (Cys-rich).

The protein belongs to the neurexophilin family. May be proteolytically processed at the boundary between the N-terminal non-conserved and the central conserved domain in neuron-like cells. Expressed in brain, spleen, and testis.

Its subcellular location is the secreted. Its function is as follows. May be signaling molecules that resemble neuropeptides and that act by binding to alpha-neurexins and possibly other receptors. The polypeptide is Neurexophilin-4 (NXPH4) (Homo sapiens (Human)).